A 213-amino-acid polypeptide reads, in one-letter code: Uracil phosphoribosyltransferase (213 aa).

Residues Arg78, Arg103, and 130-138 each bind 5-phospho-alpha-D-ribose 1-diphosphate; that span reads DPMLATGGS. Uracil contacts are provided by residues Ile197 and 202-204; that span reads GDA. Asp203 is a binding site for 5-phospho-alpha-D-ribose 1-diphosphate.

The protein belongs to the UPRTase family. Mg(2+) is required as a cofactor.

It catalyses the reaction UMP + diphosphate = 5-phospho-alpha-D-ribose 1-diphosphate + uracil. Its pathway is pyrimidine metabolism; UMP biosynthesis via salvage pathway; UMP from uracil: step 1/1. Its activity is regulated as follows. Allosterically activated by GTP. Catalyzes the conversion of uracil and 5-phospho-alpha-D-ribose 1-diphosphate (PRPP) to UMP and diphosphate. The sequence is that of Uracil phosphoribosyltransferase from Cutibacterium acnes (strain DSM 16379 / KPA171202) (Propionibacterium acnes).